Here is a 391-residue protein sequence, read N- to C-terminus: MSKAIKLPQKLMLLGSGELGKEFVIAAQRLGNYVIAVDRYANAPAMQVSDCCEVISMLSADDLEAVVTKYEPDFIIPEIEAIRTEKLQEFEDRGITVIPTAAATNYTMNRDRIRELAHEELGIRTAKYGYAVTLEELIAVSDNIGFPNVVKPVMSSSGKGQSVVATKEEVEKAWDYAIANSRGDSQKVIVEEFINFEIEITLLTIKQWNAPTIFCSPIGHRQERGDYQESWQPAGISEDKILEAQAIAKTVTDALGGAGIFGVEFFITKDEVIFSELSPRPHDTGMVTLISQNLNEFELHLRAILGLPIPKIEQLGFCASAVILASEKLDAPLFTGVAEALAEPDVDIRLFGKPTAHPYRRMGVALAKAENVETAREKATDAASKIHISSQ.

Residues 18–19 (EL) and E78 contribute to the N(1)-(5-phospho-beta-D-ribosyl)glycinamide site. Residues R110, K151, 156–161 (SSGKGQ), 191–194 (EEFI), and E199 contribute to the ATP site. Positions 115–305 (ELAHEELGIR…EFELHLRAIL (191 aa)) constitute an ATP-grasp domain. 2 residues coordinate Mg(2+): E264 and E276. N(1)-(5-phospho-beta-D-ribosyl)glycinamide-binding positions include D283, K353, and 360 to 361 (RR).

Belongs to the PurK/PurT family. Homodimer.

It carries out the reaction N(1)-(5-phospho-beta-D-ribosyl)glycinamide + formate + ATP = N(2)-formyl-N(1)-(5-phospho-beta-D-ribosyl)glycinamide + ADP + phosphate + H(+). Its pathway is purine metabolism; IMP biosynthesis via de novo pathway; N(2)-formyl-N(1)-(5-phospho-D-ribosyl)glycinamide from N(1)-(5-phospho-D-ribosyl)glycinamide (formate route): step 1/1. Involved in the de novo purine biosynthesis. Catalyzes the transfer of formate to 5-phospho-ribosyl-glycinamide (GAR), producing 5-phospho-ribosyl-N-formylglycinamide (FGAR). Formate is provided by PurU via hydrolysis of 10-formyl-tetrahydrofolate. This chain is Formate-dependent phosphoribosylglycinamide formyltransferase, found in Nostoc sp. (strain PCC 7120 / SAG 25.82 / UTEX 2576).